The primary structure comprises 471 residues: GTPase Der (471 aa).

EngA-type G domains lie at 5–168 (PVIA…TDLE) and 186–359 (IRVA…DSAF). GTP contacts are provided by residues 11–18 (GRPNVGKS), 58–62 (DTGGI), 120–123 (NKTD), 192–199 (GRPNVGKS), 239–243 (DTAGV), and 304–307 (NKWD). The region spanning 360 to 444 (IKIGTNELTR…PIRLEFKSGT (85 aa)) is the KH-like domain.

Belongs to the TRAFAC class TrmE-Era-EngA-EngB-Septin-like GTPase superfamily. EngA (Der) GTPase family. In terms of assembly, associates with the 50S ribosomal subunit.

In terms of biological role, GTPase that plays an essential role in the late steps of ribosome biogenesis. The sequence is that of GTPase Der from Alcanivorax borkumensis (strain ATCC 700651 / DSM 11573 / NCIMB 13689 / SK2).